Here is a 422-residue protein sequence, read N- to C-terminus: Solanesyl diphosphate synthase 3, chloroplastic/mitochondrial (422 aa).

The transit peptide at 1–32 directs the protein to the chloroplast and mitochondrion; that stretch reads MLFTRSVARISSKFLRNRSFYGSSQSLASHRF. Residues Lys125, Arg128, and His174 each contribute to the isopentenyl diphosphate site. Positions 181 and 185 each coordinate Mg(2+). Arg190 contributes to the an all-trans-polyprenyl diphosphate binding site. Arg191 provides a ligand contact to isopentenyl diphosphate. Residues Lys267, Thr268, Gln305, and Lys322 each coordinate an all-trans-polyprenyl diphosphate.

This sequence belongs to the FPP/GGPP synthase family. As to quaternary structure, homodimer. Requires Mg(2+) as cofactor. Ubiquitous. Highest expression in seeds and shoot apical meristem.

Its subcellular location is the plastid. It localises to the chloroplast. The protein resides in the mitochondrion. The catalysed reaction is 5 isopentenyl diphosphate + (2E,6E,10E)-geranylgeranyl diphosphate = all-trans-nonaprenyl diphosphate + 5 diphosphate. May be involved in the supply of solanesyl diphosphate for ubiquinone-9 (UQ-9) biosynthesis in mitochondria. Synthesizes C25 to C45 medium / long-chain products depending on the type of substrate available. Can use geranyl diphosphate, farnesyl diphosphate or geranylgeranyl diphosphate as substrates, but not dimethylallyl diphosphate. In Arabidopsis thaliana (Mouse-ear cress), this protein is Solanesyl diphosphate synthase 3, chloroplastic/mitochondrial.